Reading from the N-terminus, the 519-residue chain is MAGPPALPPPETAAAATTAAAASSSAASPHYQEWILDTIDSLRSRKARPDLERICRMVRRRHGPEPERTRAELEKLIQQRAVLRVSYKGSISYRNAARVQPPRRGATPPAPPRVPRGGPAAPPPTPAPPPAPVAAPTRAPRAAAATAPPSPGPAQPGPRAQRAAPLAAPPPAPAAPPAAAPPAGPRRAPPPAVAAREPPAPPQQQQPPPPQPQPPPEGGAARAGGPARPVSLREVVRYLGGSGGASGRLTRGRVQGLLEEEAARGRLERTRLGALALPRGDRPGRAPPAASARAARSKRGGEERVFEKEEEDEDEDEEEEEEDNVSEGSEVPESDRPAGAQHHQINGERGPQSAKERVKEWSPCGPYQGQDEGRGPAPGSCTRQVFPMTAVNKEGGSACVGAAPDSPSPVPLPPGKPALPGADGTPFGCPPGRKEKPTDPVEWTVMDVVEYFTEAGFPEQATAFQEQEIDGKSLLLMQRTDVLTGLSIRLGPALKIYEHHIKVLQQGHFEDDDPDGLLG.

The segment covering 1 to 11 (MAGPPALPPPE) has biased composition (pro residues). Disordered stretches follow at residues 1 to 30 (MAGPPALPPPETAAAATTAAAASSSAASPH) and 87 to 232 (YKGS…PVSL). A compositionally biased stretch (low complexity) spans 12-29 (TAAAATTAAAASSSAASP). Residues 23–99 (SSSAASPHYQ…SISYRNAARV (77 aa)) form the SAMD1-like winged helix (WH) domain. T107 is modified (phosphothreonine). Positions 108–133 (PPAPPRVPRGGPAAPPPTPAPPPAPV) are enriched in pro residues. Positions 134-147 (AAPTRAPRAAAATA) are enriched in low complexity. S150 bears the Phosphoserine mark. Residues 157–166 (GPRAQRAAPL) show a composition bias toward low complexity. The segment covering 167-217 (AAPPPAPAAPPAAAPPAGPRRAPPPAVAAREPPAPPQQQQPPPPQPQPPPE) has biased composition (pro residues). Over residues 218-230 (GGAARAGGPARPV) the composition is skewed to low complexity. A Phosphoserine modification is found at S242. Residues 261-271 (EAARGRLERTR) are compositionally biased toward basic and acidic residues. 2 disordered regions span residues 261–381 (EAAR…PGSC) and 417–439 (PALPGADGTPFGCPPGRKEKPTD). Residues 308 to 325 (KEEEDEDEDEEEEEEDNV) are compositionally biased toward acidic residues. The SAM domain maps to 443 to 511 (WTVMDVVEYF…KVLQQGHFED (69 aa)).

Homopolymerize into a closed pentameric ring. Interacts (via SAM domain) with L3MBTL3 (via SAM domain); the interaction mediates L3MBTL3 binding to chromatin. Interacts (via WH domain) with KDM1A; the interaction modulates KDM1A function. In terms of tissue distribution, expressed to similar levels in different organs. Expressed at higher levels in bone marrow, osteoclasts and spleen. Expressed in vascular smooth muscle cells.

The protein resides in the nucleus. It is found in the chromosome. Its subcellular location is the secreted. Its function is as follows. Unmethylated CpG islands (CGIs)-binding protein which localizes to H3K4me3-decorated CGIs, where it acts as a transcriptional repressor. Tethers L3MBTL3 to chromatin and interacts with the KDM1A histone demethylase complex to modulate H3K4me2 and H3K4me3 levels at CGIs. Plays a role in atherogenesis by binding with LDL on cell surface and promoting LDL oxidation which leads to the formation of foam cell. In Mus musculus (Mouse), this protein is Sterile alpha motif domain-containing protein 1.